We begin with the raw amino-acid sequence, 314 residues long: Ribonuclease Z (314 aa).

7 residues coordinate Zn(2+): histidine 62, histidine 64, aspartate 66, histidine 67, histidine 139, aspartate 210, and histidine 268. Catalysis depends on aspartate 66, which acts as the Proton acceptor.

Belongs to the RNase Z family. In terms of assembly, homodimer. Zn(2+) serves as cofactor.

It carries out the reaction Endonucleolytic cleavage of RNA, removing extra 3' nucleotides from tRNA precursor, generating 3' termini of tRNAs. A 3'-hydroxy group is left at the tRNA terminus and a 5'-phosphoryl group is left at the trailer molecule.. Functionally, zinc phosphodiesterase, which displays some tRNA 3'-processing endonuclease activity. Probably involved in tRNA maturation, by removing a 3'-trailer from precursor tRNA. This is Ribonuclease Z from Acaryochloris marina (strain MBIC 11017).